Consider the following 332-residue polypeptide: Formamidase (332 aa).

One can recognise a CN hydrolase domain in the interval Phe-14 to Pro-259. Glu-60 acts as the Proton acceptor in catalysis. The active-site Proton donor is the Lys-132. The active-site Nucleophile is Cys-165.

This sequence belongs to the carbon-nitrogen hydrolase superfamily. Aliphatic amidase family.

It catalyses the reaction formamide + H2O = formate + NH4(+). Is an aliphatic amidase with a restricted substrate specificity, as it only hydrolyzes formamide. This Bacillus cereus (strain B4264) protein is Formamidase.